A 121-amino-acid polypeptide reads, in one-letter code: DNA-directed RNA polymerase subunit Rpo8 (121 aa).

It belongs to the archaeal Rpo8 RNA polymerase subunit family. As to quaternary structure, part of the 13-subunit RNA polymerase complex. This subunit is phosphorylated.

The protein resides in the cytoplasm. It catalyses the reaction RNA(n) + a ribonucleoside 5'-triphosphate = RNA(n+1) + diphosphate. DNA-dependent RNA polymerase (RNAP) catalyzes the transcription of DNA into RNA using the four ribonucleoside triphosphates as substrates. This chain is DNA-directed RNA polymerase subunit Rpo8, found in Sulfolobus acidocaldarius (strain ATCC 33909 / DSM 639 / JCM 8929 / NBRC 15157 / NCIMB 11770).